Consider the following 305-residue polypeptide: Peroxisome assembly protein 26 (305 aa).

Topologically, residues 1–246 are cytoplasmic; that stretch reads MKSDASTSAA…RRLWGSVVSH (246 aa). A helical; Signal-anchor for type II membrane protein transmembrane segment spans residues 247-267; sequence LLSQPFRKGLLAALILCLLIL. At 268 to 305 the chain is on the peroxisomal matrix side; it reads RFDPAAPSSLPFLYQLTQLFRRIQKATLSRLYPLALRD.

This sequence belongs to the peroxin-26 family. As to quaternary structure, interacts (via its cytoplasmic domain) with PEX6; interaction is direct and is ATP-dependent. Interacts with PEX1; interaction is indirect and is mediated via interaction with PEX6.

Its subcellular location is the peroxisome membrane. Its function is as follows. Peroxisomal docking factor that anchors PEX1 and PEX6 to peroxisome membranes. PEX26 is therefore required for the formation of the PEX1-PEX6 AAA ATPase complex, a complex that mediates the extraction of the PEX5 receptor from peroxisomal membrane. The sequence is that of Peroxisome assembly protein 26 from Mus musculus (Mouse).